We begin with the raw amino-acid sequence, 149 residues long: Putative pre-16S rRNA nuclease (149 aa).

Belongs to the YqgF nuclease family.

Its subcellular location is the cytoplasm. Could be a nuclease involved in processing of the 5'-end of pre-16S rRNA. This chain is Putative pre-16S rRNA nuclease, found in Burkholderia vietnamiensis (strain G4 / LMG 22486) (Burkholderia cepacia (strain R1808)).